A 280-amino-acid polypeptide reads, in one-letter code: Ribosomal RNA small subunit methyltransferase A (280 aa).

The S-adenosyl-L-methionine site is built by His-15, Leu-17, Gly-42, Glu-64, Asp-89, and Asn-109.

It belongs to the class I-like SAM-binding methyltransferase superfamily. rRNA adenine N(6)-methyltransferase family. RsmA subfamily.

It localises to the cytoplasm. It catalyses the reaction adenosine(1518)/adenosine(1519) in 16S rRNA + 4 S-adenosyl-L-methionine = N(6)-dimethyladenosine(1518)/N(6)-dimethyladenosine(1519) in 16S rRNA + 4 S-adenosyl-L-homocysteine + 4 H(+). Functionally, specifically dimethylates two adjacent adenosines (A1518 and A1519) in the loop of a conserved hairpin near the 3'-end of 16S rRNA in the 30S particle. May play a critical role in biogenesis of 30S subunits. This Prochlorococcus marinus (strain MIT 9313) protein is Ribosomal RNA small subunit methyltransferase A.